The primary structure comprises 180 residues: Major urinary protein 1 (180 aa).

The signal sequence occupies residues 1-18; sequence MKMLLLLCLGLTLVCVHA. The cysteines at positions 82 and 175 are disulfide-linked.

The protein belongs to the calycin superfamily. Lipocalin family. Abundant in the urine of adult male mice but absent from that of females.

Its subcellular location is the secreted. Its function is as follows. Binds pheromones that are released from drying urine of males. These pheromones affect the sexual behavior of females. This Mus musculus (Mouse) protein is Major urinary protein 1 (Mup1).